Reading from the N-terminus, the 238-residue chain is LRRN4 C-terminal-like protein (238 aa).

Residues 1–22 (MLGSPCLLWLLAVTFLVPRAQP) form the signal peptide. Residues 23-194 (LAPQDFEEEE…RLAVPPNPRT (172 aa)) are Extracellular-facing. Residues 82–176 (PPDPPRMGEV…AGGEGLEGAD (95 aa)) enclose the Fibronectin type-III domain. A glycan (N-linked (GlcNAc...) asparagine) is linked at Asn132. A helical membrane pass occupies residues 195–215 (LVHAAVGVGTALALLSCAALV). Over 216–238 (WHFCLRDRWGCPRRAAARAAGAL) the chain is Cytoplasmic.

The protein localises to the membrane. The sequence is that of LRRN4 C-terminal-like protein (LRRN4CL) from Homo sapiens (Human).